The primary structure comprises 147 residues: Large ribosomal subunit protein uL15 (147 aa).

A compositionally biased stretch (basic and acidic residues) spans 1-13 (MRLHDLKPAEGAR). The segment at 1–58 (MRLHDLKPAEGARRERKRVGRGIGSGHGKTSGRGQKGQKARSGGGVRPGFEGGQMPLT) is disordered. Composition is skewed to gly residues over residues 21 to 35 (RGIGSGHGKTSGRGQ) and 42 to 52 (SGGGVRPGFEG).

This sequence belongs to the universal ribosomal protein uL15 family. As to quaternary structure, part of the 50S ribosomal subunit.

In terms of biological role, binds to the 23S rRNA. The chain is Large ribosomal subunit protein uL15 from Thermoanaerobacter sp. (strain X514).